The chain runs to 119 residues: MNMTRDADLKVKAVARGVFMSPQKVRRVLDQIRGRSYEEALMILQFMPYRACEPISKVLYSAAANAKNNLGLTKASLSISEAKVDKGPILKRFRPRAQGRGFPIRKPTCQISITVQSIK.

The protein belongs to the universal ribosomal protein uL22 family. In terms of assembly, part of the 50S ribosomal subunit.

Its subcellular location is the plastid. It localises to the chloroplast. Functionally, this protein binds specifically to 23S rRNA. Its function is as follows. The globular domain of the protein is located near the polypeptide exit tunnel on the outside of the subunit, while an extended beta-hairpin is found that lines the wall of the exit tunnel in the center of the 70S ribosome. The polypeptide is Large ribosomal subunit protein uL22c (rpl22) (Mesostigma viride (Green alga)).